The chain runs to 137 residues: Nucleoside diphosphate kinase (137 aa).

Residues K9, F57, R85, T91, R102, and N112 each coordinate ATP. H115 serves as the catalytic Pros-phosphohistidine intermediate.

Belongs to the NDK family. In terms of assembly, homotetramer. Mg(2+) is required as a cofactor.

The protein localises to the cytoplasm. The catalysed reaction is a 2'-deoxyribonucleoside 5'-diphosphate + ATP = a 2'-deoxyribonucleoside 5'-triphosphate + ADP. It catalyses the reaction a ribonucleoside 5'-diphosphate + ATP = a ribonucleoside 5'-triphosphate + ADP. In terms of biological role, major role in the synthesis of nucleoside triphosphates other than ATP. The ATP gamma phosphate is transferred to the NDP beta phosphate via a ping-pong mechanism, using a phosphorylated active-site intermediate. The polypeptide is Nucleoside diphosphate kinase (Sulfurimonas denitrificans (strain ATCC 33889 / DSM 1251) (Thiomicrospira denitrificans (strain ATCC 33889 / DSM 1251))).